Here is a 108-residue protein sequence, read N- to C-terminus: Pyrimidine/purine nucleoside phosphorylase (108 aa).

The protein belongs to the nucleoside phosphorylase PpnP family.

It catalyses the reaction a purine D-ribonucleoside + phosphate = a purine nucleobase + alpha-D-ribose 1-phosphate. The enzyme catalyses adenosine + phosphate = alpha-D-ribose 1-phosphate + adenine. The catalysed reaction is cytidine + phosphate = cytosine + alpha-D-ribose 1-phosphate. It carries out the reaction guanosine + phosphate = alpha-D-ribose 1-phosphate + guanine. It catalyses the reaction inosine + phosphate = alpha-D-ribose 1-phosphate + hypoxanthine. The enzyme catalyses thymidine + phosphate = 2-deoxy-alpha-D-ribose 1-phosphate + thymine. The catalysed reaction is uridine + phosphate = alpha-D-ribose 1-phosphate + uracil. It carries out the reaction xanthosine + phosphate = alpha-D-ribose 1-phosphate + xanthine. Its function is as follows. Catalyzes the phosphorolysis of diverse nucleosides, yielding D-ribose 1-phosphate and the respective free bases. Can use uridine, adenosine, guanosine, cytidine, thymidine, inosine and xanthosine as substrates. Also catalyzes the reverse reactions. The chain is Pyrimidine/purine nucleoside phosphorylase from Acinetobacter baylyi (strain ATCC 33305 / BD413 / ADP1).